The chain runs to 423 residues: Phosphoribosylamine--glycine ligase (423 aa).

Residues 107–312 (KAFADRYGLP…LVPYLVACAN (206 aa)) enclose the ATP-grasp domain. 133-193 (LELFEPPYVI…EEFLEGEIGS (61 aa)) is an ATP binding site. The Mg(2+) site is built by glutamate 270, glutamate 282, and asparagine 284. Residues glutamate 270, glutamate 282, and asparagine 284 each coordinate Mn(2+).

This sequence belongs to the GARS family. The cofactor is Mg(2+). It depends on Mn(2+) as a cofactor.

It catalyses the reaction 5-phospho-beta-D-ribosylamine + glycine + ATP = N(1)-(5-phospho-beta-D-ribosyl)glycinamide + ADP + phosphate + H(+). It functions in the pathway purine metabolism; IMP biosynthesis via de novo pathway; N(1)-(5-phospho-D-ribosyl)glycinamide from 5-phospho-alpha-D-ribose 1-diphosphate: step 2/2. The chain is Phosphoribosylamine--glycine ligase from Phenylobacterium zucineum (strain HLK1).